A 68-amino-acid polypeptide reads, in one-letter code: Galectin-10 (68 aa).

A Galectin domain is found at 1–68 (EPYLQVDFHT…LSISVLPDKY (68 aa)).

Interacts with CEL.

It is found in the cytoplasm. The protein resides in the cytosol. Its subcellular location is the cytoplasmic granule. Its function is as follows. Regulates immune responses through the recognition of cell-surface glycans. Essential for the anergy and suppressive function of CD25-positive regulatory T-cells (Treg). The protein is Galectin-10 (CLC) of Pongo pygmaeus (Bornean orangutan).